The primary structure comprises 268 residues: Cytochrome b-c1 complex subunit Rieske-3, mitochondrial (268 aa).

Residues 1–56 constitute a mitochondrion transit peptide; the sequence is MLRIAGRKLSSSAATRSSSAFFTRNPFTFTDDSSSPARSPSPASLASQFLDQFRGF. The Mitochondrial matrix segment spans residues 57–105; that stretch reads SSNSVSPAHQTGLVSDLPATVAAIKNPSSKIVYDDSNHERYPPGDPSKR. The chain crosses the membrane as a helical span at residues 106-128; it reads AFAYFVLTGGRFVYASLVRLLIL. The Mitochondrial intermembrane portion of the chain corresponds to 129–268; it reads KFVLSMSASK…FMEENKLLIG (140 aa). In terms of domain architecture, Rieske spans 178-266; the sequence is INLANSVDLG…YSFMEENKLL (89 aa). [2Fe-2S] cluster contacts are provided by Cys211, His213, Cys230, and His233. Cys216 and Cys232 are oxidised to a cystine.

It belongs to the Rieske iron-sulfur protein family. In terms of assembly, component of the ubiquinol-cytochrome c oxidoreductase (cytochrome b-c1 complex, complex III, CIII), a multisubunit enzyme composed of 3 respiratory subunits cytochrome b, cytochrome c1 and Rieske protein, 2 core protein subunits, and several low-molecular weight protein subunits. The complex exists as an obligatory dimer and forms supercomplexes (SCs) in the inner mitochondrial membrane with cytochrome c oxidase (complex IV, CIV). Requires [2Fe-2S] cluster as cofactor. In terms of tissue distribution, high levels are seen in the flowers while a low level expression is seen in the roots, leaves and stems.

The protein resides in the mitochondrion inner membrane. It catalyses the reaction a quinol + 2 Fe(III)-[cytochrome c](out) = a quinone + 2 Fe(II)-[cytochrome c](out) + 2 H(+)(out). In terms of biological role, component of the ubiquinol-cytochrome c oxidoreductase, a multisubunit transmembrane complex that is part of the mitochondrial electron transport chain which drives oxidative phosphorylation. The respiratory chain contains 3 multisubunit complexes succinate dehydrogenase (complex II, CII), ubiquinol-cytochrome c oxidoreductase (cytochrome b-c1 complex, complex III, CIII) and cytochrome c oxidase (complex IV, CIV), that cooperate to transfer electrons derived from NADH and succinate to molecular oxygen, creating an electrochemical gradient over the inner membrane that drives transmembrane transport and the ATP synthase. The cytochrome b-c1 complex catalyzes electron transfer from ubiquinol to cytochrome c, linking this redox reaction to translocation of protons across the mitochondrial inner membrane, with protons being carried across the membrane as hydrogens on the quinol. In the process called Q cycle, 2 protons are consumed from the matrix, 4 protons are released into the intermembrane space and 2 electrons are passed to cytochrome c. The Rieske protein is a catalytic core subunit containing a [2Fe-2S] iron-sulfur cluster. It cycles between 2 conformational states during catalysis to transfer electrons from the quinol bound in the Q(0) site in cytochrome b to cytochrome c1. This chain is Cytochrome b-c1 complex subunit Rieske-3, mitochondrial, found in Nicotiana tabacum (Common tobacco).